Reading from the N-terminus, the 575-residue chain is Stage VI sporulation protein D (575 aa).

Residues 159-502 are disordered; sequence EELSEPPAHS…ETKEPQTKES (344 aa). The span at 200-212 shows a compositional bias: basic and acidic residues; it reads GLREELETEKAES. 2 stretches are compositionally biased toward acidic residues: residues 229-238 and 249-264; these read KEEEESEELA and ETEE…EIEI. Basic and acidic residues-rich tracts occupy residues 266 to 275, 283 to 302, and 310 to 325; these read EIVKAKKETA, DVRE…HVGA, and AELH…KEET. Positions 438–448 are enriched in acidic residues; that stretch reads EEEEQEEESFE. The segment covering 449-464 has biased composition (basic and acidic residues); sequence IEVRKTPSAEEPKEET. Over residues 465–474 the composition is skewed to polar residues; the sequence is PFQSFQLPES. A compositionally biased stretch (basic and acidic residues) spans 493–502; sequence ETKEPQTKES. A LysM domain is found at 523-567; sequence KICIVQQEDTIERLCERYEITSQQLIRMNSLALDDELKAGQILYI.

Its function is as follows. Required for assembly of a normal spore coat. May be a component of the innermost layer of the spore coat that aids in its adherence to the prespore. The chain is Stage VI sporulation protein D (spoVID) from Bacillus subtilis (strain 168).